The following is a 110-amino-acid chain: Small ribosomal subunit protein bS16 (110 aa).

The interval K84–A110 is disordered. The segment covering N90–A103 has biased composition (basic and acidic residues).

The protein belongs to the bacterial ribosomal protein bS16 family.

The protein is Small ribosomal subunit protein bS16 of Afipia carboxidovorans (strain ATCC 49405 / DSM 1227 / KCTC 32145 / OM5) (Oligotropha carboxidovorans).